Reading from the N-terminus, the 364-residue chain is MQDRQKAQDYRALLLADTPLIDVRAPIEFEQGAMPGAINLPLMMDDERAAVGTCYKRQGADAALALGHRLVCGDIRQQRLEAWKAAYQRFPNGYLCCARGGQRSHIVQRWLQETGIDCPLIEGGYKALRQTAIQATWQLAQKPILLIGGCTGSGKTQLVRQQPNGVDLEGLARHRGSSFGRTLKPQLSQASFENKLAVELLKINARQTLKRWVLEDEGRTIGANHLPECLRERMAQAPIAVVEDPFALRLERLREEYFIRMHHDFTHAYGDGAGWQAYSEYLHHGLFAIRRRLGLQRFAELTDTLDRALAEQLSSGSTDGHMAWLVPLLNEYYDPMYRYQLEKKAANIVFRGTWQDVANWLKAQ.

A Rhodanese domain is found at 14–137 (LLADTPLIDV…LRQTAIQATW (124 aa)). Cys-97 functions as the S-selanylcysteine intermediate in the catalytic mechanism.

This sequence belongs to the SelU family. Monomer.

The catalysed reaction is 5-methylaminomethyl-2-thiouridine(34) in tRNA + selenophosphate + (2E)-geranyl diphosphate + H2O + H(+) = 5-methylaminomethyl-2-selenouridine(34) in tRNA + (2E)-thiogeraniol + phosphate + diphosphate. It catalyses the reaction 5-methylaminomethyl-2-thiouridine(34) in tRNA + (2E)-geranyl diphosphate = 5-methylaminomethyl-S-(2E)-geranyl-thiouridine(34) in tRNA + diphosphate. The enzyme catalyses 5-methylaminomethyl-S-(2E)-geranyl-thiouridine(34) in tRNA + selenophosphate + H(+) = 5-methylaminomethyl-2-(Se-phospho)selenouridine(34) in tRNA + (2E)-thiogeraniol. It carries out the reaction 5-methylaminomethyl-2-(Se-phospho)selenouridine(34) in tRNA + H2O = 5-methylaminomethyl-2-selenouridine(34) in tRNA + phosphate. In terms of biological role, involved in the post-transcriptional modification of the uridine at the wobble position (U34) of tRNA(Lys), tRNA(Glu) and tRNA(Gln). Catalyzes the conversion of 2-thiouridine (S2U-RNA) to 2-selenouridine (Se2U-RNA). Acts in a two-step process involving geranylation of 2-thiouridine (S2U) to S-geranyl-2-thiouridine (geS2U) and subsequent selenation of the latter derivative to 2-selenouridine (Se2U) in the tRNA chain. This is tRNA 2-selenouridine synthase from Salmonella typhi.